A 313-amino-acid chain; its full sequence is Porphobilinogen deaminase (313 aa).

An S-(dipyrrolylmethanemethyl)cysteine modification is found at Cys242.

The protein belongs to the HMBS family. In terms of assembly, monomer. The cofactor is dipyrromethane.

The enzyme catalyses 4 porphobilinogen + H2O = hydroxymethylbilane + 4 NH4(+). It participates in porphyrin-containing compound metabolism; protoporphyrin-IX biosynthesis; coproporphyrinogen-III from 5-aminolevulinate: step 2/4. Tetrapolymerization of the monopyrrole PBG into the hydroxymethylbilane pre-uroporphyrinogen in several discrete steps. This Salmonella arizonae (strain ATCC BAA-731 / CDC346-86 / RSK2980) protein is Porphobilinogen deaminase.